The primary structure comprises 729 residues: 1,4-alpha-glucan branching enzyme GlgB (729 aa).

The Nucleophile role is filled by aspartate 409. Glutamate 462 acts as the Proton donor in catalysis.

This sequence belongs to the glycosyl hydrolase 13 family. GlgB subfamily. Monomer.

The enzyme catalyses Transfers a segment of a (1-&gt;4)-alpha-D-glucan chain to a primary hydroxy group in a similar glucan chain.. Its pathway is glycan biosynthesis; glycogen biosynthesis. Catalyzes the formation of the alpha-1,6-glucosidic linkages in glycogen by scission of a 1,4-alpha-linked oligosaccharide from growing alpha-1,4-glucan chains and the subsequent attachment of the oligosaccharide to the alpha-1,6 position. The protein is 1,4-alpha-glucan branching enzyme GlgB of Saccharophagus degradans (strain 2-40 / ATCC 43961 / DSM 17024).